The chain runs to 385 residues: Putative ribosomal RNA large subunit methyltransferase MJ1653 (385 aa).

The PUA domain occupies 2–81 (TTKLYVDFGG…LDENYIREKI (80 aa)).

Belongs to the methyltransferase superfamily. RlmI family.

The protein resides in the cytoplasm. The chain is Putative ribosomal RNA large subunit methyltransferase MJ1653 from Methanocaldococcus jannaschii (strain ATCC 43067 / DSM 2661 / JAL-1 / JCM 10045 / NBRC 100440) (Methanococcus jannaschii).